A 650-amino-acid chain; its full sequence is MASSHSLLFSSSFLSKPSSFTSSLRRFVYLPTRQFWPRQRHGFSTVFAVATEPAISSSGPKKAEPSTVVLPSNESSDKLLKIRHTCAHVMAMAVQKLFPDAKVTIGPWIDNGFYYDFDMEPLTDKDLKRIKKEMDRIISRNLPLLREEVSREEAKKRIMAINEPYKMEILDGIKEEPITVYHIGNEWWDLCAGPHVETTGKINKKAVELESVAGAYWRGDEKRQMLQRIYGTAWESEEQLKAYLHFKEEAKRRDHRRIGQDLDLFSIQDEAGGGLVFWHPKGAIVRNIIEESWKKMHVEHGYDLIYTPHVAKADLWKISGHLDFYRENMYDQMEIEDELYQLRPMNCPYHILLYQRKRQSYRDLPIRVAELGTVYRYELSGSLHGLFRVRGFTQDDAHIFCLEDQIKDEIRGVLDLTEEILSRFGFNKYEVNLSTRPEKSVGGDDIWEKATCALRDALDDKGWSYEVDEGGGAFYGPKIDLKIEDALGRKWQCSTIQVDFNLPQRFDITYVDTNSDKKRPIMIHRAVLGSLERFFGVLIEHYAGDFPLWLSPVQVRVLPVTDNQLEFCKEVSKKLRACGVRAELCHGERLPKLIRNAETQKIPLMAVVGPKEVETGTVTVRSRFGGELGTIPVDDLINKINIAVETRTAL.

Residues Cys-347, His-398, and His-524 each coordinate Zn(2+).

It belongs to the class-II aminoacyl-tRNA synthetase family.

The protein resides in the plastid. It localises to the chloroplast. Its subcellular location is the mitochondrion. The enzyme catalyses tRNA(Thr) + L-threonine + ATP = L-threonyl-tRNA(Thr) + AMP + diphosphate + H(+). The polypeptide is Threonine--tRNA ligase, chloroplastic/mitochondrial 2 (Arabidopsis thaliana (Mouse-ear cress)).